We begin with the raw amino-acid sequence, 481 residues long: Ribosomal RNA small subunit methyltransferase F (481 aa).

S-adenosyl-L-methionine contacts are provided by residues Ala125–Lys131, Glu149, Asp176, and Asp194. Cys247 acts as the Nucleophile in catalysis.

This sequence belongs to the class I-like SAM-binding methyltransferase superfamily. RsmB/NOP family.

It localises to the cytoplasm. The enzyme catalyses cytidine(1407) in 16S rRNA + S-adenosyl-L-methionine = 5-methylcytidine(1407) in 16S rRNA + S-adenosyl-L-homocysteine + H(+). Its function is as follows. Specifically methylates the cytosine at position 1407 (m5C1407) of 16S rRNA. The protein is Ribosomal RNA small subunit methyltransferase F of Psychromonas ingrahamii (strain DSM 17664 / CCUG 51855 / 37).